Consider the following 276-residue polypeptide: Casein kinase II subunit beta-3 (276 aa).

2 disordered regions span residues 1–22 (MYKE…LGGA) and 34–86 (KKLE…SEGD).

It belongs to the casein kinase 2 subunit beta family. As to quaternary structure, heterotetramer of two catalytic alpha subunits and two regulatory beta subunits. Interacts with CCA1. Interacts with LHY. Phosphorylated by alpha subunit.

The protein localises to the cytoplasm. Its subcellular location is the cytosol. The protein resides in the nucleus. Its function is as follows. Plays a complex role in regulating the basal catalytic activity of the alpha subunit. The tetrameric holoenzyme CK2, composed of two alpha and two beta subunits, phosphorylates the transcription factor PIF1 after an exposure to light, resulting in a proteasome-dependent degradation of PIF1 and promotion of photomorphogenesis. CK2 phosphorylates translation initiation factors. May participate in the regulation of the initiation of translation. Stimulates the binding of CCA1 to promoters. In Arabidopsis thaliana (Mouse-ear cress), this protein is Casein kinase II subunit beta-3 (CKB3).